The primary structure comprises 666 residues: Frizzled-3 (666 aa).

The signal sequence occupies residues 1–22; the sequence is MAVSWIVFDLWLLTVFLGQIGG. In terms of domain architecture, FZ spans 23 to 136; it reads HSLFSCEPIT…CSRFPDCDEP (114 aa). The Extracellular segment spans residues 23–205; that stretch reads HSLFSCEPIT…REELSFARYF (183 aa). Disulfide bonds link cysteine 28–cysteine 89, cysteine 36–cysteine 82, cysteine 73–cysteine 110, cysteine 99–cysteine 133, and cysteine 103–cysteine 127. A glycan (N-linked (GlcNAc...) asparagine) is linked at asparagine 42. A helical membrane pass occupies residues 206–226; it reads IGLISIICLSATLFTFLTFLI. Residues 227-237 lie on the Cytoplasmic side of the membrane; the sequence is DVTRFRYPERP. Residues 238 to 258 traverse the membrane as a helical segment; sequence IIFYAVCYMMVSLIFFIGFLL. The Extracellular portion of the chain corresponds to 259–288; sequence EDRVACNASSPAQYKASTVTQGSHNKACTM. The N-linked (GlcNAc...) asparagine glycan is linked to asparagine 265. A helical membrane pass occupies residues 289-309; it reads LFMVLYFFTMAGSVWWVILTI. Residues 310–328 lie on the Cytoplasmic side of the membrane; sequence TWFLAAVPKWGSEAIEKKA. The helical transmembrane segment at 329–349 threads the bilayer; the sequence is LLFHASAWGIPGTLTIILLAM. The Extracellular portion of the chain corresponds to 350–374; that stretch reads NKIEGDNISGVCFVGLYDVDALRYF. Residue asparagine 356 is glycosylated (N-linked (GlcNAc...) asparagine). Residues 375–395 traverse the membrane as a helical segment; that stretch reads VLAPLCLYVVVGVSLLLAGII. Over 396–420 the chain is Cytoplasmic; it reads SLNRVRIEIPLEKENQDKLVKFMIR. Residues 421-441 form a helical membrane-spanning segment; the sequence is IGVFSILYLVPLLVVIGCYFY. Topologically, residues 442 to 477 are extracellular; the sequence is EQAYRGIWETTWIQERCREYHIPCPYQVTQMSRPDL. Residues 478-498 form a helical membrane-spanning segment; it reads ILFLMKYLMALIVGIPSIFWV. Residues 499–666 lie on the Cytoplasmic side of the membrane; sequence GSKKTCFEWA…RVIEEDGTSA (168 aa). The short motif at 502-507 is the Lys-Thr-X-X-X-Trp motif, mediates interaction with the PDZ domain of Dvl family members element; it reads KTCFEW. A disordered region spans residues 538-666; the sequence is RDPNTPIIRK…RVIEEDGTSA (129 aa). Positions 550–565 are enriched in polar residues; the sequence is GTSTQGTSTHASSTQL. Over residues 617-638 the composition is skewed to basic and acidic residues; sequence LTDHSRHSSSHRLNEQSRHSSI. The span at 639 to 656 shows a compositional bias: polar residues; the sequence is RDLSNNPMTHITHGTSMN.

Belongs to the G-protein coupled receptor Fz/Smo family. In terms of assembly, interacts with VANGL2. Post-translationally, ubiquitinated by ZNRF3, leading to its degradation by the proteasome. As to expression, expressed in the cortex, diencephalon, rostral brainstem and little or no staining is seen in the striatum or cerebellum. Expressed in both hair cells and supporting cells in the utricle, saccule, cristae and the organ of Corti in the inner ear (at protein level). Highly expressed in the CNS. In skin, it is restricted to the epidermis and to the developing hair follicle.

The protein localises to the membrane. The protein resides in the cell membrane. Its subcellular location is the cell surface. It localises to the apical cell membrane. Functionally, receptor for Wnt proteins. Most of frizzled receptors are coupled to the beta-catenin canonical signaling pathway, which leads to the activation of disheveled proteins, inhibition of GSK-3 kinase, nuclear accumulation of beta-catenin and activation of Wnt target genes. A second signaling pathway involving PKC and calcium fluxes has been seen for some family members, but it is not yet clear if it represents a distinct pathway or if it can be integrated in the canonical pathway, as PKC seems to be required for Wnt-mediated inactivation of GSK-3 kinase. Both pathways seem to involve interactions with G-proteins. Activation by Wnt5A stimulates PKC activity via a G-protein-dependent mechanism. Involved in transduction and intercellular transmission of polarity information during tissue morphogenesis and/or in differentiated tissues. Plays a role in controlling early axon growth and guidance processes necessary for the formation of a subset of central and peripheral major fiber tracts. Required for the development of major fiber tracts in the central nervous system, including: the anterior commissure, the corpus callosum, the thalamocortical, corticothalamic and nigrostriatal tracts, the corticospinal tract, the fasciculus retroflexus, the mammillothalamic tract, the medial lemniscus, and ascending fiber tracts from the spinal cord to the brain. In the peripheral nervous system, controls axon growth in distinct populations of cranial and spinal motor neurons, including the facial branchimotor nerve, the hypoglossal nerve, the phrenic nerve, and motor nerves innervating dorsal limbs. Involved in the migration of cranial neural crest cells. May also be implicated in the transmission of sensory information from the trunk and limbs to the brain. Controls commissural sensory axons guidance after midline crossing along the anterior-posterior axis in the developing spinal cord in a Wnt-dependent signaling pathway. Together with FZD6, is involved in the neural tube closure and plays a role in the regulation of the establishment of planar cell polarity (PCP), particularly in the orientation of asymmetric bundles of stereocilia on the apical faces of a subset of auditory and vestibular sensory cells located in the inner ear. Promotes neurogenesis by maintaining sympathetic neuroblasts within the cell cycle in a beta-catenin-dependent manner. In Mus musculus (Mouse), this protein is Frizzled-3 (Fzd3).